The following is a 305-amino-acid chain: MRIVFMGTPGFAEVILRALVENKNNHIEVVGLFTQMDKPFGRKKELKAPETKTYILENHLNIPIFQPQSLKEPEVQILKDLKPDFIVVVAYGKILPKEVLTIAPCINAHASLLPKYRGASPIHEMILNDDRIYGISTMLMDLELDSGDILESASFLREDYLDLDALSLKLAHMGADLLFSTLKNFSSITRKPQDHMQATFCKKITKADGLVGFKDAKSLFLKSLAFKSWPEIFLENSLKLLEVGLVENEKSHKEGEILEIDEKGVLVGCLKGSVRVAWLQAVGKKPLKAKDYLNGRRLKIGGILA.

Residue S111 to P114 participates in (6S)-5,6,7,8-tetrahydrofolate binding.

Belongs to the Fmt family.

It carries out the reaction L-methionyl-tRNA(fMet) + (6R)-10-formyltetrahydrofolate = N-formyl-L-methionyl-tRNA(fMet) + (6S)-5,6,7,8-tetrahydrofolate + H(+). Attaches a formyl group to the free amino group of methionyl-tRNA(fMet). The formyl group appears to play a dual role in the initiator identity of N-formylmethionyl-tRNA by promoting its recognition by IF2 and preventing the misappropriation of this tRNA by the elongation apparatus. This is Methionyl-tRNA formyltransferase from Helicobacter pylori (strain HPAG1).